Here is a 131-residue protein sequence, read N- to C-terminus: MTDPIADYLTRLRNAIMAGHRVVSVPASNIKKEITKILFDKGYILNYKFEENDSQGIIKVALKYDLAHKVNAIKKLKRVSRPGLRKYVGYRDMPRVLNGLGIAIVSTPRGVMTDKEARELKVGGEVLCYVY.

It belongs to the universal ribosomal protein uS8 family. Part of the 30S ribosomal subunit. Contacts proteins S5 and S12.

Functionally, one of the primary rRNA binding proteins, it binds directly to 16S rRNA central domain where it helps coordinate assembly of the platform of the 30S subunit. In Porphyromonas gingivalis (strain ATCC 33277 / DSM 20709 / CIP 103683 / JCM 12257 / NCTC 11834 / 2561), this protein is Small ribosomal subunit protein uS8.